A 339-amino-acid polypeptide reads, in one-letter code: Ketol-acid reductoisomerase (NADP(+)) (339 aa).

Residues 1–182 (MRVYYDRDAD…GGGRAGIIET (182 aa)) form the KARI N-terminal Rossmann domain. NADP(+) is bound by residues 24–27 (YGSQ), Arg-48, Ser-51, and 83–86 (DEGQ). His-108 is an active-site residue. Gly-134 contacts NADP(+). Residues 183-328 (SFKEEVETDL…EKLRGMMPWI (146 aa)) form the KARI C-terminal knotted domain. The Mg(2+) site is built by Asp-191, Glu-195, Glu-227, and Glu-231. Ser-252 serves as a coordination point for substrate.

It belongs to the ketol-acid reductoisomerase family. Requires Mg(2+) as cofactor.

It carries out the reaction (2R)-2,3-dihydroxy-3-methylbutanoate + NADP(+) = (2S)-2-acetolactate + NADPH + H(+). The catalysed reaction is (2R,3R)-2,3-dihydroxy-3-methylpentanoate + NADP(+) = (S)-2-ethyl-2-hydroxy-3-oxobutanoate + NADPH + H(+). It functions in the pathway amino-acid biosynthesis; L-isoleucine biosynthesis; L-isoleucine from 2-oxobutanoate: step 2/4. Its pathway is amino-acid biosynthesis; L-valine biosynthesis; L-valine from pyruvate: step 2/4. Its function is as follows. Involved in the biosynthesis of branched-chain amino acids (BCAA). Catalyzes an alkyl-migration followed by a ketol-acid reduction of (S)-2-acetolactate (S2AL) to yield (R)-2,3-dihydroxy-isovalerate. In the isomerase reaction, S2AL is rearranged via a Mg-dependent methyl migration to produce 3-hydroxy-3-methyl-2-ketobutyrate (HMKB). In the reductase reaction, this 2-ketoacid undergoes a metal-dependent reduction by NADPH to yield (R)-2,3-dihydroxy-isovalerate. This Gluconacetobacter diazotrophicus (strain ATCC 49037 / DSM 5601 / CCUG 37298 / CIP 103539 / LMG 7603 / PAl5) protein is Ketol-acid reductoisomerase (NADP(+)).